The following is a 223-amino-acid chain: Glycosylphosphatidylinositol anchor biosynthesis protein 11 (223 aa).

6 helical membrane-spanning segments follow: residues 25–45, 52–72, 88–108, 120–140, 158–178, and 189–209; these read LAVV…SAGI, VMTQ…VVVL, MIAA…LVLF, FVCA…TYHL, VYAA…PIPY, and ITIL…GIAL.

It belongs to the PIGF family.

It is found in the endoplasmic reticulum membrane. It participates in glycolipid biosynthesis; glycosylphosphatidylinositol-anchor biosynthesis. Acts in the GPI biosynthetic pathway between GlcNAc-PI synthesis and GPI transfer to protein. This Yarrowia lipolytica (strain CLIB 122 / E 150) (Yeast) protein is Glycosylphosphatidylinositol anchor biosynthesis protein 11 (GPI11).